A 347-amino-acid polypeptide reads, in one-letter code: Rhodopsin (347 aa).

Over 1 to 33 the chain is Extracellular; sequence TEGPDFYIPMVNTTGVVRSPYEYPQYYLVNPAA. Asn12 carries N-linked (GlcNAc...) asparagine glycosylation. The chain crosses the membrane as a helical span at residues 34–58; that stretch reads FAVLGAYMFFLIIIGFPINFLTLYV. Residues 59–70 are Cytoplasmic-facing; that stretch reads TLEHKKLRTPLN. The chain crosses the membrane as a helical span at residues 71 to 93; sequence YILLNLAVADLFMVIGGFTTTMY. Over 94–107 the chain is Extracellular; it reads SSMHGYFVLGRLGC. Cys107 and Cys184 are disulfide-bonded. A helical membrane pass occupies residues 108–130; that stretch reads NIEGFFATLGGMISLWSLAVLAI. Positions 131-133 match the 'Ionic lock' involved in activated form stabilization motif; that stretch reads ERW. Over 131–149 the chain is Cytoplasmic; that stretch reads ERWVVVCKPISNFRFGENH. The chain crosses the membrane as a helical span at residues 150 to 170; that stretch reads AIMGVSLTWVMALACTVPPLV. Residues 171–199 lie on the Extracellular side of the membrane; it reads GWSRYIPEGMQCACGIDYYTRAEGYNNES. Residue Asn197 is glycosylated (N-linked (GlcNAc...) asparagine). Residues 200–221 form a helical membrane-spanning segment; the sequence is FVIYMFTFHFLFPMFIIFFCYG. Residues 222-249 lie on the Cytoplasmic side of the membrane; that stretch reads RLLCAVKEAAAAQQESETTQRAEREVTR. A helical transmembrane segment spans residues 250–271; it reads MVILMVIGYLVCWLPYASVAWF. Residues 272-283 are Extracellular-facing; it reads IFTHKGSEFGPL. The helical transmembrane segment at 284–305 threads the bilayer; the sequence is FMAVPSFFAKSSSIYNPIIYIC. Lys293 bears the N6-(retinylidene)lysine mark. Residues 306-347 are Cytoplasmic-facing; sequence MNKQFRQCMITTLFCGKNPFEGQEEDSSTKTEASSASSVSPA. Cys320 carries the S-palmitoyl cysteine lipid modification. The interval 326–347 is disordered; it reads EGQEEDSSTKTEASSASSVSPA. Residues 335–347 are compositionally biased toward low complexity; the sequence is KTEASSASSVSPA.

This sequence belongs to the G-protein coupled receptor 1 family. Opsin subfamily. Post-translationally, phosphorylated on some or all of the serine and threonine residues present in the C-terminal region. Contains one covalently linked retinal chromophore.

It is found in the membrane. The protein localises to the cell projection. It localises to the cilium. Its subcellular location is the photoreceptor outer segment. Functionally, photoreceptor required for image-forming vision at low light intensity. While most salt water fish species use retinal as chromophore, most freshwater fish use 3-dehydroretinal, or a mixture of retinal and 3-dehydroretinal. Light-induced isomerization of 11-cis to all-trans retinal triggers a conformational change that activates signaling via G-proteins. Subsequent receptor phosphorylation mediates displacement of the bound G-protein alpha subunit by arrestin and terminates signaling. In Sargocentron tiere (Blue lined squirrelfish), this protein is Rhodopsin (rho).